Here is a 237-residue protein sequence, read N- to C-terminus: Cysteine-rich venom protein ENH2 (237 aa).

A signal peptide spans Met1–Ala18. Residues Val37–Tyr165 enclose the SCP domain. 7 disulfides stabilise this stretch: Cys74–Cys152, Cys91–Cys166, Cys147–Cys163, Cys185–Cys192, Cys188–Cys197, Cys210–Cys228, and Cys219–Cys232. The region spanning Cys201–Lys237 is the ShKT domain.

It belongs to the CRISP family. Expressed by the venom gland.

It localises to the secreted. Blocks contraction of smooth muscle elicited by high potassium-induced depolarization, but does not block caffeine-stimulated contraction. May target voltage-gated calcium channels on smooth muscle. The polypeptide is Cysteine-rich venom protein ENH2 (Pseudoferania polylepis (Macleay's water snake)).